Reading from the N-terminus, the 157-residue chain is GDP-mannose mannosyl hydrolase (157 aa).

Residues 2-3, Phe8, and Arg36 contribute to the substrate site; that span reads FL. The Nudix hydrolase domain occupies 3 to 153; sequence LRQEDFAAVV…SRAYFSPDAP (151 aa). 3 residues coordinate Mg(2+): Gly49, Glu69, and Gln122. The short motif at 50 to 71 is the Nudix box element; sequence GRVCKDETLEAAFARLTQAELG.

The protein belongs to the Nudix hydrolase family. Homodimer. It depends on Mg(2+) as a cofactor.

The catalysed reaction is GDP-alpha-D-mannose + H2O = D-mannose + GDP + H(+). Its function is as follows. Hydrolyzes GDP-mannose. The sequence is that of GDP-mannose mannosyl hydrolase from Salmonella typhi.